A 368-amino-acid chain; its full sequence is Glutamate 5-kinase (368 aa).

Lys11 provides a ligand contact to ATP. Positions 51, 138, and 150 each coordinate substrate. ATP is bound by residues 170–171 and 212–218; these read TD and TGGMATK. Residues 276 to 354 form the PUA domain; that stretch reads AGEIIVDHGA…QQISQILGYE (79 aa).

It belongs to the glutamate 5-kinase family.

The protein localises to the cytoplasm. The catalysed reaction is L-glutamate + ATP = L-glutamyl 5-phosphate + ADP. It functions in the pathway amino-acid biosynthesis; L-proline biosynthesis; L-glutamate 5-semialdehyde from L-glutamate: step 1/2. In terms of biological role, catalyzes the transfer of a phosphate group to glutamate to form L-glutamate 5-phosphate. The protein is Glutamate 5-kinase of Photorhabdus laumondii subsp. laumondii (strain DSM 15139 / CIP 105565 / TT01) (Photorhabdus luminescens subsp. laumondii).